Here is a 154-residue protein sequence, read N- to C-terminus: Putative pre-16S rRNA nuclease (154 aa).

Belongs to the YqgF nuclease family.

It is found in the cytoplasm. Functionally, could be a nuclease involved in processing of the 5'-end of pre-16S rRNA. The chain is Putative pre-16S rRNA nuclease from Rickettsia rickettsii (strain Iowa).